A 436-amino-acid polypeptide reads, in one-letter code: Gamma-glutamyl phosphate reductase (436 aa).

This sequence belongs to the gamma-glutamyl phosphate reductase family.

It localises to the cytoplasm. It carries out the reaction L-glutamate 5-semialdehyde + phosphate + NADP(+) = L-glutamyl 5-phosphate + NADPH + H(+). Its pathway is amino-acid biosynthesis; L-proline biosynthesis; L-glutamate 5-semialdehyde from L-glutamate: step 2/2. In terms of biological role, catalyzes the NADPH-dependent reduction of L-glutamate 5-phosphate into L-glutamate 5-semialdehyde and phosphate. The product spontaneously undergoes cyclization to form 1-pyrroline-5-carboxylate. This is Gamma-glutamyl phosphate reductase from Prochlorococcus marinus (strain MIT 9312).